Here is a 76-residue protein sequence, read N- to C-terminus: Large ribosomal subunit protein eL20 (76 aa).

Belongs to the eukaryotic ribosomal protein eL20 family. In terms of assembly, part of the 50S ribosomal subunit. Binds 23S rRNA.

The chain is Large ribosomal subunit protein eL20 from Methanococcus maripaludis (strain C5 / ATCC BAA-1333).